The primary structure comprises 161 residues: Myosin regulatory light chain (161 aa).

Phosphoserine occurs at positions 13 and 14. EF-hand domains lie at 20-55 (EQVA…FGVF), 56-91 (VMED…RMKQ), and 93-128 (SNEQ…LGDK).

Myosin is a hexamer of 2 heavy chains and 4 light chains (two regulatory light chains and two essential light chains).

The protein is Myosin regulatory light chain (mlcR) of Dictyostelium discoideum (Social amoeba).